The primary structure comprises 680 residues: WD repeat-containing protein 48 homolog (680 aa).

8 WD repeats span residues 26–65 (QHRNGVNSLQLDPNNGKLYSAGRDAIIRVWNTRSESSEKY), 71–110 (HHNDWVNDIVLCCNGRNLISASCDTTVKVWNAQKGFCMST), 113–152 (THRDYVQALAYAKDREQVASAGLDKAIFLWDVNTLTALTA), 164–203 (GSKDSIYSLAMNPSGTVIVSGSTENILRIWDPRTCMRSMK), 206–245 (GHTENVRCLVVSPDGNQVVSGSSDGTIKVWNLGQQRCVQT), 248–287 (VHKEGVWSLLMSENFQYIISGSRDQNIIVTEMRNPSNKTL), 290–329 (EEKAPVLSLGYNMDKTGVWATTWNSDIRCWKLPMYDRGTL), and 350–389 (KGGAAIKECTVLNDKRYILTKDSQDQVVLYDVLRVVKKDT). The segment at 594–618 (TPSGANANNSLQNSQSDGNSEGSQL) is disordered. Positions 596–609 (SGANANNSLQNSQS) are enriched in low complexity.

Belongs to the WD repeat WDR48 family. As to quaternary structure, catalytic component of the Usp12-46 deubiquitylase complex consisting of Usp12-46, Wdr20 and Uaf1; regulatory subunit that, together wtih Wdr20, stabilizes Usp12-46. The Usp12-46 deubiquitylase complex associates with arr/arrow; the interaction leads to deubiquitination and stabilization of arr/arrow.

In terms of biological role, regulatory component of the Usp12-46 deubiquitylase complex. activates deubiquitination by increasing the catalytic turnover without increasing the affinity of deubiquitinating enzymes for the substrate. The complex deubiquitylates the wg/wingless-signaling receptor arr/arrow, which stabilizes the receptor and increases its concentration at the cell surface; this enhances the sensitivity of cells to wg/wingless-signal stimulation. This increases the amplitude and spatial range of the signaling response to the wg/wingless morphogen gradient, facilitating the precise concentration-dependent regulation of its target genes. Together with Wdr20 and Usp12-46 required for wg/wingless-mediated signaling in the wing imaginal disc and for wg/wingless-dependent regulation of intestinal stem cell proliferation. The chain is WD repeat-containing protein 48 homolog from Drosophila persimilis (Fruit fly).